The sequence spans 184 residues: Myosin regulatory light chain 1 (184 aa).

Residues 1 to 29 (MFSSKENSLGAKRAPFSSNTTSSQRVAAQ) form a disordered region. Serine 36 carries the phosphoserine modification. EF-hand domains are found at residues 45 to 80 (SQIQ…LNQD) and 114 to 149 (SPRN…MGDR). Ca(2+) is bound by residues aspartate 58, aspartate 60, aspartate 62, asparagine 64, and aspartate 69.

As to quaternary structure, binds to myosin II chains myo2 and myo3.

The protein resides in the cytoplasm. In Schizosaccharomyces pombe (strain 972 / ATCC 24843) (Fission yeast), this protein is Myosin regulatory light chain 1 (rlc1).